The primary structure comprises 413 residues: Imidazolonepropionase (413 aa).

Fe(3+) is bound by residues histidine 77 and histidine 79. Residues histidine 77 and histidine 79 each coordinate Zn(2+). 3 residues coordinate 4-imidazolone-5-propanoate: arginine 86, tyrosine 149, and histidine 182. Position 149 (tyrosine 149) interacts with N-formimidoyl-L-glutamate. Residue histidine 247 participates in Fe(3+) binding. A Zn(2+)-binding site is contributed by histidine 247. Residue glutamine 250 coordinates 4-imidazolone-5-propanoate. Position 322 (aspartate 322) interacts with Fe(3+). A Zn(2+)-binding site is contributed by aspartate 322. Residues asparagine 324 and glycine 326 each contribute to the N-formimidoyl-L-glutamate site. Threonine 327 is a 4-imidazolone-5-propanoate binding site.

It belongs to the metallo-dependent hydrolases superfamily. HutI family. Zn(2+) is required as a cofactor. The cofactor is Fe(3+).

The protein localises to the cytoplasm. The catalysed reaction is 4-imidazolone-5-propanoate + H2O = N-formimidoyl-L-glutamate. It functions in the pathway amino-acid degradation; L-histidine degradation into L-glutamate; N-formimidoyl-L-glutamate from L-histidine: step 3/3. In terms of biological role, catalyzes the hydrolytic cleavage of the carbon-nitrogen bond in imidazolone-5-propanoate to yield N-formimidoyl-L-glutamate. It is the third step in the universal histidine degradation pathway. In Chromobacterium violaceum (strain ATCC 12472 / DSM 30191 / JCM 1249 / CCUG 213 / NBRC 12614 / NCIMB 9131 / NCTC 9757 / MK), this protein is Imidazolonepropionase.